A 1270-amino-acid polypeptide reads, in one-letter code: DNA-directed RNA polymerase subunit beta (1270 aa).

It belongs to the RNA polymerase beta chain family. As to quaternary structure, the RNAP catalytic core consists of 2 alpha, 1 beta, 1 beta' and 1 omega subunit. When a sigma factor is associated with the core the holoenzyme is formed, which can initiate transcription.

The catalysed reaction is RNA(n) + a ribonucleoside 5'-triphosphate = RNA(n+1) + diphosphate. DNA-dependent RNA polymerase catalyzes the transcription of DNA into RNA using the four ribonucleoside triphosphates as substrates. The polypeptide is DNA-directed RNA polymerase subunit beta (Bacteroides thetaiotaomicron (strain ATCC 29148 / DSM 2079 / JCM 5827 / CCUG 10774 / NCTC 10582 / VPI-5482 / E50)).